Reading from the N-terminus, the 319-residue chain is 33 kDa chaperonin (319 aa).

2 cysteine pairs are disulfide-bonded: Cys239/Cys241 and Cys272/Cys275. Residues 300–319 (EVSEEMKKAEEKEKEEKNKK) are disordered.

It belongs to the HSP33 family. In terms of processing, under oxidizing conditions two disulfide bonds are formed involving the reactive cysteines. Under reducing conditions zinc is bound to the reactive cysteines and the protein is inactive.

Its subcellular location is the cytoplasm. In terms of biological role, redox regulated molecular chaperone. Protects both thermally unfolding and oxidatively damaged proteins from irreversible aggregation. Plays an important role in the bacterial defense system toward oxidative stress. This Clostridium perfringens (strain ATCC 13124 / DSM 756 / JCM 1290 / NCIMB 6125 / NCTC 8237 / Type A) protein is 33 kDa chaperonin.